Consider the following 86-residue polypeptide: Large ribosomal subunit protein uL23 (86 aa).

It belongs to the universal ribosomal protein uL23 family. Part of the 50S ribosomal subunit. Contacts protein L29.

In terms of biological role, binds to 23S rRNA. One of the proteins that surrounds the polypeptide exit tunnel on the outside of the ribosome. This is Large ribosomal subunit protein uL23 from Methanocaldococcus jannaschii (strain ATCC 43067 / DSM 2661 / JAL-1 / JCM 10045 / NBRC 100440) (Methanococcus jannaschii).